The following is a 279-amino-acid chain: uncharacterized protein (279 aa).

This is an uncharacterized protein from Bacillus subtilis (strain 168).